The primary structure comprises 453 residues: Bifunctional protein GlmU (453 aa).

The tract at residues 1–225 is pyrophosphorylase; the sequence is MNIVILAAGT…EWETLGVNSK (225 aa). Residues 6–9, K20, Q71, 76–77, 98–100, G135, E150, N165, and N223 contribute to the UDP-N-acetyl-alpha-D-glucosamine site; these read LAAG, GT, and YGD. Mg(2+) is bound at residue D100. N223 is a Mg(2+) binding site. Residues 226 to 246 form a linker region; sequence QQLAELERIHQRNVADALLVA. Residues 247–453 form an N-acetyltransferase region; the sequence is GVTLADPARL…GYVRPTKKKS (207 aa). UDP-N-acetyl-alpha-D-glucosamine contacts are provided by R329 and K347. H359 (proton acceptor) is an active-site residue. Y362 and N373 together coordinate UDP-N-acetyl-alpha-D-glucosamine. Acetyl-CoA is bound by residues A376, 382–383, S401, and A419; that span reads NY.

It in the N-terminal section; belongs to the N-acetylglucosamine-1-phosphate uridyltransferase family. In the C-terminal section; belongs to the transferase hexapeptide repeat family. As to quaternary structure, homotrimer. It depends on Mg(2+) as a cofactor.

It localises to the cytoplasm. The enzyme catalyses alpha-D-glucosamine 1-phosphate + acetyl-CoA = N-acetyl-alpha-D-glucosamine 1-phosphate + CoA + H(+). It carries out the reaction N-acetyl-alpha-D-glucosamine 1-phosphate + UTP + H(+) = UDP-N-acetyl-alpha-D-glucosamine + diphosphate. Its pathway is nucleotide-sugar biosynthesis; UDP-N-acetyl-alpha-D-glucosamine biosynthesis; N-acetyl-alpha-D-glucosamine 1-phosphate from alpha-D-glucosamine 6-phosphate (route II): step 2/2. It functions in the pathway nucleotide-sugar biosynthesis; UDP-N-acetyl-alpha-D-glucosamine biosynthesis; UDP-N-acetyl-alpha-D-glucosamine from N-acetyl-alpha-D-glucosamine 1-phosphate: step 1/1. It participates in bacterial outer membrane biogenesis; LPS lipid A biosynthesis. In terms of biological role, catalyzes the last two sequential reactions in the de novo biosynthetic pathway for UDP-N-acetylglucosamine (UDP-GlcNAc). The C-terminal domain catalyzes the transfer of acetyl group from acetyl coenzyme A to glucosamine-1-phosphate (GlcN-1-P) to produce N-acetylglucosamine-1-phosphate (GlcNAc-1-P), which is converted into UDP-GlcNAc by the transfer of uridine 5-monophosphate (from uridine 5-triphosphate), a reaction catalyzed by the N-terminal domain. In Paraburkholderia xenovorans (strain LB400), this protein is Bifunctional protein GlmU.